Reading from the N-terminus, the 194-residue chain is dCTP deaminase (194 aa).

Residues 110 to 115, aspartate 128, 136 to 138, tyrosine 171, lysine 178, and glutamine 182 each bind dCTP; these read RSSLAR and VLE. Glutamate 138 acts as the Proton donor/acceptor in catalysis. Residues 172-194 are disordered; sequence NKRKSAKYRDQQEAVASRISQDK.

The protein belongs to the dCTP deaminase family. Homotrimer.

The catalysed reaction is dCTP + H2O + H(+) = dUTP + NH4(+). It participates in pyrimidine metabolism; dUMP biosynthesis; dUMP from dCTP (dUTP route): step 1/2. Its function is as follows. Catalyzes the deamination of dCTP to dUTP. The sequence is that of dCTP deaminase from Shewanella loihica (strain ATCC BAA-1088 / PV-4).